Reading from the N-terminus, the 745-residue chain is Phosphoribosylformylglycinamidine synthase subunit PurL (745 aa).

H41 is an active-site residue. Residues Y44 and K83 each contribute to the ATP site. Residue E85 participates in Mg(2+) binding. Substrate contacts are provided by residues 86-89 (SHNH) and R108. H87 acts as the Proton acceptor in catalysis. D109 lines the Mg(2+) pocket. Position 232 (Q232) interacts with substrate. D260 provides a ligand contact to Mg(2+). 304 to 306 (ESQ) contacts substrate. Positions 494 and 531 each coordinate ATP. N532 lines the Mg(2+) pocket. S534 is a binding site for substrate.

It belongs to the FGAMS family. Monomer. Part of the FGAM synthase complex composed of 1 PurL, 1 PurQ and 2 PurS subunits.

Its subcellular location is the cytoplasm. It catalyses the reaction N(2)-formyl-N(1)-(5-phospho-beta-D-ribosyl)glycinamide + L-glutamine + ATP + H2O = 2-formamido-N(1)-(5-O-phospho-beta-D-ribosyl)acetamidine + L-glutamate + ADP + phosphate + H(+). It participates in purine metabolism; IMP biosynthesis via de novo pathway; 5-amino-1-(5-phospho-D-ribosyl)imidazole from N(2)-formyl-N(1)-(5-phospho-D-ribosyl)glycinamide: step 1/2. In terms of biological role, part of the phosphoribosylformylglycinamidine synthase complex involved in the purines biosynthetic pathway. Catalyzes the ATP-dependent conversion of formylglycinamide ribonucleotide (FGAR) and glutamine to yield formylglycinamidine ribonucleotide (FGAM) and glutamate. The FGAM synthase complex is composed of three subunits. PurQ produces an ammonia molecule by converting glutamine to glutamate. PurL transfers the ammonia molecule to FGAR to form FGAM in an ATP-dependent manner. PurS interacts with PurQ and PurL and is thought to assist in the transfer of the ammonia molecule from PurQ to PurL. The polypeptide is Phosphoribosylformylglycinamidine synthase subunit PurL (Aquifex aeolicus (strain VF5)).